Consider the following 189-residue polypeptide: UPF0301 protein CCA_00630 (189 aa).

Belongs to the UPF0301 (AlgH) family.

This Chlamydia caviae (strain ATCC VR-813 / DSM 19441 / 03DC25 / GPIC) (Chlamydophila caviae) protein is UPF0301 protein CCA_00630.